Here is a 251-residue protein sequence, read N- to C-terminus: MRILVSNDDGYLAPGIRVLADCLAKIAEVIVVAPDRDRSGASHSLTLDTPLRATLGENGFYRVEGTPTDCVHLGITGLLEKEPDMVVSGVNWGANLGDDVIYSGTVAAAMEGRFLGLPAIAVSLASAEPEHFDTAAWVARRLVTSLMEDPLPADTILNVNVPNLPRTQITDFEATRLGHRHRSEPVIKDADPRGRPIYWVGPAGESQDAGPGTDFHAIARGSVSITPIQVDLTRYAALDQVAGWLQRIPRS.

The a divalent metal cation site is built by Asp-8, Asp-9, Ser-39, and Asn-91.

This sequence belongs to the SurE nucleotidase family. A divalent metal cation serves as cofactor.

The protein resides in the cytoplasm. The catalysed reaction is a ribonucleoside 5'-phosphate + H2O = a ribonucleoside + phosphate. Nucleotidase that shows phosphatase activity on nucleoside 5'-monophosphates. The sequence is that of 5'-nucleotidase SurE from Nitrosococcus oceani (strain ATCC 19707 / BCRC 17464 / JCM 30415 / NCIMB 11848 / C-107).